Reading from the N-terminus, the 180-residue chain is ATP-dependent protease subunit HslV (180 aa).

Residue Thr-5 is part of the active site. Residues Gly-161, Cys-164, and Thr-167 each coordinate Na(+).

Belongs to the peptidase T1B family. HslV subfamily. A double ring-shaped homohexamer of HslV is capped on each side by a ring-shaped HslU homohexamer. The assembly of the HslU/HslV complex is dependent on binding of ATP.

Its subcellular location is the cytoplasm. It carries out the reaction ATP-dependent cleavage of peptide bonds with broad specificity.. Its activity is regulated as follows. Allosterically activated by HslU binding. In terms of biological role, protease subunit of a proteasome-like degradation complex believed to be a general protein degrading machinery. This is ATP-dependent protease subunit HslV from Campylobacter curvus (strain 525.92).